Consider the following 550-residue polypeptide: Coiled-coil domain-containing protein 60 (550 aa).

A disordered region spans residues 1 to 21; that stretch reads MTKVPATKKLQSSPNSGAVRP. A coiled-coil region spans residues 71–98; it reads AILREETAKKKKQQQLQKLKEEERNKFQ. Disordered stretches follow at residues 219–293 and 336–367; these read KFKI…EPLY and AYKE…KKSK. Over residues 235 to 256 the composition is skewed to low complexity; the sequence is RGSTLSLSRASGGSSPQSSMIS. The segment covering 336–345 has biased composition (polar residues); the sequence is AYKEMQTTLK.

The protein is Coiled-coil domain-containing protein 60 (CCDC60) of Homo sapiens (Human).